The sequence spans 304 residues: DCN1-like protein 3 (304 aa).

2 disordered regions span residues 1–87 (MGQC…EESS) and 284–304 (EVEG…EEQT). The N-myristoyl glycine moiety is linked to residue glycine 2. A DCUN1 domain is found at 86–278 (SSLQRLEELF…LFDTFVEWEM (193 aa)).

In terms of assembly, part of a complex containing DCUN1D3, CUL3 and RBX1. Interacts (via the DCUN1 domain) with the unneddylated cullins: interacts with CUL1, CUL2, CUL3, CUL4A, CUL4B and CUL5; these interactions promote the cullin neddylation and the identity of the cullin dictates the affinity of the interaction. Interacts preferentially with CUL3; this interaction triggers the relocalization of CUL3 to the cell membrane where CUL3 is neddylated. Interacts (via DCUN1 domain) with RBX1. May also interact with regulators or subunits of cullin-RING ligases such as RNF7, ELOB and DDB1; these interactions are bridged by cullins. Interacts (via DCUN1 domain) with CAND1; this interaction is bridged by cullins and strongly inhibits cullin neddylation. These CAND-cullin-DCNL complexes can only be neddylated in the presence of a substrate adapter. Interacts (via DCUN1 domain) with the N-terminally acetylated form of UBE2M and UBE2F. Highest levels of expression are in the testis. Very low levels of expression in the heart, brain, skeletal muscle, kidney, liver, spleen, lung and ovary.

The protein resides in the cell membrane. It is found in the cytoplasm. It localises to the nucleus. The protein localises to the perinuclear region. Contributes to the neddylation of all cullins by transferring NEDD8 from N-terminally acetylated NEDD8-conjugating E2s enzyme to different cullin C-terminal domain-RBX complexes and may play a role in the cell cycle progression by regulating the SCF ubiquitin E3 ligase complex, after UV damage. At the cell membrane, can promote and as well inhibit cullins neddylation. The polypeptide is DCN1-like protein 3 (Mus musculus (Mouse)).